The sequence spans 99 residues: A-type ATP synthase subunit F (99 aa).

Belongs to the V-ATPase F subunit family. As to quaternary structure, has multiple subunits with at least A(3), B(3), C, D, E, F, H, I and proteolipid K(x).

The protein localises to the cell membrane. Functionally, component of the A-type ATP synthase that produces ATP from ADP in the presence of a proton gradient across the membrane. This is A-type ATP synthase subunit F from Methanococcus maripaludis (strain C5 / ATCC BAA-1333).